Consider the following 321-residue polypeptide: MQELDLIIVGAGPVGLYAAFYAGMRGLSVAIIESAQVAGGQPQNLYPEKLIYDIAGLPAVTGADLTKNLLEQLAQISHRLFLGESVQKIEKEDGIFSVITDKSNRKAKAVLLTTGAGLLKPRKLGIDNEENLANEGKISYFITSLKEFEGKNVAVFGGGDSALDWSLMLEKVAKEVHLVHRRTAFRGHEMTVDRVMNSGIQVHTPYTFSNFNENDLELKKVKAEENLNFSIDKILVNYGFLTNQVSLAENLEVSRNGRVKADSMMQSNIEGLYVAGDASDYAGKMPLMSVGFGEAVHAINAMTKKLEFDHPLRGGHSSSIF.

Glu-33, Gln-41, Tyr-46, Val-86, Leu-119, Asp-277, and Ser-318 together coordinate FAD.

It belongs to the ferredoxin--NADP reductase type 2 family. Homodimer. FAD is required as a cofactor.

The enzyme catalyses 2 reduced [2Fe-2S]-[ferredoxin] + NADP(+) + H(+) = 2 oxidized [2Fe-2S]-[ferredoxin] + NADPH. The polypeptide is Ferredoxin--NADP reductase (Lactococcus lactis subsp. cremoris (strain SK11)).